A 294-amino-acid chain; its full sequence is 33 kDa chaperonin (294 aa).

2 disulfides stabilise this stretch: Cys-239-Cys-241 and Cys-272-Cys-275.

This sequence belongs to the HSP33 family. Post-translationally, under oxidizing conditions two disulfide bonds are formed involving the reactive cysteines. Under reducing conditions zinc is bound to the reactive cysteines and the protein is inactive.

It is found in the cytoplasm. In terms of biological role, redox regulated molecular chaperone. Protects both thermally unfolding and oxidatively damaged proteins from irreversible aggregation. Plays an important role in the bacterial defense system toward oxidative stress. This is 33 kDa chaperonin from Lacticaseibacillus paracasei (strain ATCC 334 / BCRC 17002 / CCUG 31169 / CIP 107868 / KCTC 3260 / NRRL B-441) (Lactobacillus paracasei).